A 115-amino-acid chain; its full sequence is MKKKHRIKKNDEFQTVFQKGKSTANRQFVVYQLDKEEQPNFRIGLSVSKKIGNAVVRNRIKRMIRQSITELKDEIDSGKDFVIIARKPCAEMTYEEVKKSLIHVFKRSGMKRIKK.

The protein belongs to the RnpA family. In terms of assembly, consists of a catalytic RNA component (M1 or rnpB) and a protein subunit.

The catalysed reaction is Endonucleolytic cleavage of RNA, removing 5'-extranucleotides from tRNA precursor.. RNaseP catalyzes the removal of the 5'-leader sequence from pre-tRNA to produce the mature 5'-terminus. It can also cleave other RNA substrates such as 4.5S RNA. The protein component plays an auxiliary but essential role in vivo by binding to the 5'-leader sequence and broadening the substrate specificity of the ribozyme. This chain is Ribonuclease P protein component, found in Bacillus cereus (strain Q1).